We begin with the raw amino-acid sequence, 158 residues long: Nucleoside diphosphate kinase (158 aa).

ATP contacts are provided by Lys-16, Phe-64, Arg-92, Thr-98, Arg-109, and Asn-119. The Pros-phosphohistidine intermediate role is filled by His-122.

The protein belongs to the NDK family. It depends on Mg(2+) as a cofactor.

It localises to the cytoplasm. It catalyses the reaction a 2'-deoxyribonucleoside 5'-diphosphate + ATP = a 2'-deoxyribonucleoside 5'-triphosphate + ADP. The catalysed reaction is a ribonucleoside 5'-diphosphate + ATP = a ribonucleoside 5'-triphosphate + ADP. In terms of biological role, major role in the synthesis of nucleoside triphosphates other than ATP. The ATP gamma phosphate is transferred to the NDP beta phosphate via a ping-pong mechanism, using a phosphorylated active-site intermediate. The protein is Nucleoside diphosphate kinase of Haloquadratum walsbyi (strain DSM 16790 / HBSQ001).